A 139-amino-acid chain; its full sequence is Large ribosomal subunit protein uL16 (139 aa).

It belongs to the universal ribosomal protein uL16 family. In terms of assembly, part of the 50S ribosomal subunit.

Its function is as follows. Binds 23S rRNA and is also seen to make contacts with the A and possibly P site tRNAs. The protein is Large ribosomal subunit protein uL16 of Chlorobium phaeobacteroides (strain BS1).